We begin with the raw amino-acid sequence, 150 residues long: Small ribosomal subunit protein bS6 (150 aa).

The tract at residues 99-150 (GPSAMLQKRDRDDRGERGERGFGGGGFGGGRDREDRPRRGRDREEAATEETF) is disordered. Basic and acidic residues-rich tracts occupy residues 105–118 (QKRD…RGER) and 128–144 (GRDR…REEA).

This sequence belongs to the bacterial ribosomal protein bS6 family.

Its function is as follows. Binds together with bS18 to 16S ribosomal RNA. The sequence is that of Small ribosomal subunit protein bS6 from Azorhizobium caulinodans (strain ATCC 43989 / DSM 5975 / JCM 20966 / LMG 6465 / NBRC 14845 / NCIMB 13405 / ORS 571).